The chain runs to 473 residues: Siroheme synthase (473 aa).

The segment at 1-203 is precorrin-2 dehydrogenase /sirohydrochlorin ferrochelatase; the sequence is MTLFPIFADL…QQPGLAEQEL (203 aa). NAD(+)-binding positions include 22 to 23 and 43 to 44; these read AV and PR. Position 128 is a phosphoserine (Ser-128). The tract at residues 216-473 is uroporphyrinogen-III C-methyltransferase; that stretch reads GSVVLVGAGP…GLPGPQALAA (258 aa). Pro-225 contributes to the S-adenosyl-L-methionine binding site. Asp-248 (proton acceptor) is an active-site residue. Lys-270 acts as the Proton donor in catalysis. S-adenosyl-L-methionine contacts are provided by residues 302-304, Ile-307, 332-333, Met-384, and Gly-413; these read GGD and TA.

This sequence in the N-terminal section; belongs to the precorrin-2 dehydrogenase / sirohydrochlorin ferrochelatase family. In the C-terminal section; belongs to the precorrin methyltransferase family.

It carries out the reaction uroporphyrinogen III + 2 S-adenosyl-L-methionine = precorrin-2 + 2 S-adenosyl-L-homocysteine + H(+). The enzyme catalyses precorrin-2 + NAD(+) = sirohydrochlorin + NADH + 2 H(+). It catalyses the reaction siroheme + 2 H(+) = sirohydrochlorin + Fe(2+). It participates in cofactor biosynthesis; adenosylcobalamin biosynthesis; precorrin-2 from uroporphyrinogen III: step 1/1. Its pathway is cofactor biosynthesis; adenosylcobalamin biosynthesis; sirohydrochlorin from precorrin-2: step 1/1. The protein operates within porphyrin-containing compound metabolism; siroheme biosynthesis; precorrin-2 from uroporphyrinogen III: step 1/1. It functions in the pathway porphyrin-containing compound metabolism; siroheme biosynthesis; siroheme from sirohydrochlorin: step 1/1. It participates in porphyrin-containing compound metabolism; siroheme biosynthesis; sirohydrochlorin from precorrin-2: step 1/1. Multifunctional enzyme that catalyzes the SAM-dependent methylations of uroporphyrinogen III at position C-2 and C-7 to form precorrin-2 via precorrin-1. Then it catalyzes the NAD-dependent ring dehydrogenation of precorrin-2 to yield sirohydrochlorin. Finally, it catalyzes the ferrochelation of sirohydrochlorin to yield siroheme. The sequence is that of Siroheme synthase from Bordetella pertussis (strain Tohama I / ATCC BAA-589 / NCTC 13251).